The sequence spans 455 residues: Glutamyl-tRNA reductase (455 aa).

Substrate contacts are provided by residues 49–52, S109, 114–116, and Q120; these read TCNR and ETQ. C50 functions as the Nucleophile in the catalytic mechanism. Residue 189–194 coordinates NADP(+); sequence GAGKMG.

The protein belongs to the glutamyl-tRNA reductase family. Homodimer.

The enzyme catalyses (S)-4-amino-5-oxopentanoate + tRNA(Glu) + NADP(+) = L-glutamyl-tRNA(Glu) + NADPH + H(+). Its pathway is porphyrin-containing compound metabolism; protoporphyrin-IX biosynthesis; 5-aminolevulinate from L-glutamyl-tRNA(Glu): step 1/2. Functionally, catalyzes the NADPH-dependent reduction of glutamyl-tRNA(Glu) to glutamate 1-semialdehyde (GSA). The chain is Glutamyl-tRNA reductase from Geobacillus thermodenitrificans (strain NG80-2).